The primary structure comprises 210 residues: Putative protein-lysine deacylase ABHD14B (210 aa).

The residue at position 2 (A2) is an N-acetylalanine. Residue S91 is modified to Phosphoserine. Active-site charge relay system residues include S111, D162, and H188.

It belongs to the AB hydrolase superfamily. ABHD14 family. May interact with TAF1.

It localises to the cytoplasm. It is found in the nucleus. The catalysed reaction is L-lysyl-[protein] + acetyl-CoA = N(6)-acetyl-L-lysyl-[protein] + CoA + H(+). Functionally, acts as an atypical protein-lysine deacetylase in vitro. Catalyzes the deacetylation of lysine residues using CoA as substrate, generating acetyl-CoA and the free amine of protein-lysine residues. Additional experiments are however required to confirm the protein-lysine deacetylase activity in vivo. Has hydrolase activity towards various surrogate p-nitrophenyl (pNp) substrates, such as pNp-butyrate, pNp-acetate and pNp-octanoate in vitro, with a strong preference for pNp-acetate. May activate transcription. The protein is Putative protein-lysine deacylase ABHD14B of Pongo abelii (Sumatran orangutan).